Consider the following 458-residue polypeptide: Flavohemoprotein (458 aa).

The Globin domain maps to 2–158; it reads TLSEDTLRAV…LADLFIKREE (157 aa). Residue H107 coordinates heme b. Residues Y117 and E157 each act as charge relay system in the active site. Residues 169–457 form a reductase region; sequence GGWRQTRTFR…FEMFGPFKAS (289 aa). Residues 172 to 279 form the FAD-binding FR-type domain; the sequence is RQTRTFRVEE…APPYGDFFLR (108 aa). FAD-binding positions include Y211 and 228–231; that span reads RQYS. 321-326 contributes to the NADP(+) binding site; the sequence is GIGQTP. 450-453 contributes to the FAD binding site; sequence MFGP.

This sequence belongs to the globin family. Two-domain flavohemoproteins subfamily. In the C-terminal section; belongs to the flavoprotein pyridine nucleotide cytochrome reductase family. In terms of assembly, monomer. Heme b is required as a cofactor. The cofactor is FAD.

It carries out the reaction 2 nitric oxide + NADPH + 2 O2 = 2 nitrate + NADP(+) + H(+). It catalyses the reaction 2 nitric oxide + NADH + 2 O2 = 2 nitrate + NAD(+) + H(+). Its function is as follows. Flavohemoprotein involved in nitric oxide (NO) detoxification in an aerobic process, termed nitric oxide dioxygenase (NOD) reaction that utilizes O(2) and NAD(P)H to convert NO to nitrate, which protects the protozoan parasite from various noxious nitrogen compounds. Therefore, plays a central role in the inducible response to nitrosative stress. May also be involved in O(2) detoxification. In Giardia intestinalis (strain ATCC 50803 / WB clone C6) (Giardia lamblia), this protein is Flavohemoprotein (hmpA).